Consider the following 83-residue polypeptide: UPF0298 protein SERP0712 (83 aa).

Belongs to the UPF0298 family.

It localises to the cytoplasm. The protein is UPF0298 protein SERP0712 of Staphylococcus epidermidis (strain ATCC 35984 / DSM 28319 / BCRC 17069 / CCUG 31568 / BM 3577 / RP62A).